A 274-amino-acid polypeptide reads, in one-letter code: Large ribosomal subunit protein uL2 (274 aa).

Residues 224-274 (VAMNPVDHPHGGGEGRTSGGRHPVTPWGIPTKGYKTRRNKRSNKLIVQKRK) are disordered. The segment covering 257 to 274 (YKTRRNKRSNKLIVQKRK) has biased composition (basic residues).

The protein belongs to the universal ribosomal protein uL2 family. As to quaternary structure, part of the 50S ribosomal subunit. Forms a bridge to the 30S subunit in the 70S ribosome.

Functionally, one of the primary rRNA binding proteins. Required for association of the 30S and 50S subunits to form the 70S ribosome, for tRNA binding and peptide bond formation. It has been suggested to have peptidyltransferase activity; this is somewhat controversial. Makes several contacts with the 16S rRNA in the 70S ribosome. This Francisella tularensis subsp. tularensis (strain FSC 198) protein is Large ribosomal subunit protein uL2.